The chain runs to 135 residues: Large ribosomal subunit protein eL32 (135 aa).

The protein belongs to the eukaryotic ribosomal protein eL32 family.

The chain is Large ribosomal subunit protein eL32 from Methanococcus maripaludis (strain C5 / ATCC BAA-1333).